We begin with the raw amino-acid sequence, 860 residues long: DNA mismatch repair protein MutS (860 aa).

607 to 614 (GPNMSGKS) is an ATP binding site.

The protein belongs to the DNA mismatch repair MutS family.

Its function is as follows. This protein is involved in the repair of mismatches in DNA. It is possible that it carries out the mismatch recognition step. This protein has a weak ATPase activity. The polypeptide is DNA mismatch repair protein MutS (Listeria innocua serovar 6a (strain ATCC BAA-680 / CLIP 11262)).